The following is a 117-amino-acid chain: UPF0145 protein CV_4322 (117 aa).

It belongs to the UPF0145 family.

The protein is UPF0145 protein CV_4322 of Chromobacterium violaceum (strain ATCC 12472 / DSM 30191 / JCM 1249 / CCUG 213 / NBRC 12614 / NCIMB 9131 / NCTC 9757 / MK).